Here is a 317-residue protein sequence, read N- to C-terminus: Melanocyte-stimulating hormone receptor (317 aa).

Residues 1–37 are Extracellular-facing; the sequence is MPMQGAQRKLLGSLNSTPTATSNLGLAANHTGAPCLE. A glycan (N-linked (GlcNAc...) asparagine) is linked at Asn29. The helical transmembrane segment at 38–63 threads the bilayer; the sequence is VSIPDGLFLSLGLVSLVENVLVVAAI. Topologically, residues 64–72 are cytoplasmic; sequence AKNRNLHSS. The chain crosses the membrane as a helical span at residues 73–93; it reads MYCFICCLALSDLLVSGSNML. The Extracellular segment spans residues 94–118; it reads ETAVILLLEAGALATRTSAVQRLHN. Residues 119 to 140 traverse the membrane as a helical segment; the sequence is TIDVLTCSSMLCSLCFLGAIAV. Residues 141–163 lie on the Cytoplasmic side of the membrane; the sequence is DRYISIFYALRYHSIVTLPRTQR. Residues 164 to 183 traverse the membrane as a helical segment; sequence VIAAIWVASVLSSTLFITYY. Topologically, residues 184–191 are extracellular; sequence DHAAVLLC. The helical transmembrane segment at 192-211 threads the bilayer; sequence LVVFFLAMLVLMAVLYVHML. At 212-240 the chain is on the cytoplasmic side; the sequence is ARACQHAHGIIRLHKRQSPAHQGFGLRGA. Residues 241 to 266 traverse the membrane as a helical segment; it reads ATLTILLGIFFLCWGPFFLHLTLVVF. Topologically, residues 267–279 are extracellular; sequence CPQHLTCSCIFKN. A helical membrane pass occupies residues 280-300; the sequence is FKVFLTLIICNTIIDPLIYAF. Over 301–317 the chain is Cytoplasmic; the sequence is RSQELRRTLKEVLLCSW. Cys315 is lipidated: S-palmitoyl cysteine.

This sequence belongs to the G-protein coupled receptor 1 family. Interacts with MGRN1, but does not undergo MGRN1-mediated ubiquitination; this interaction competes with GNAS-binding and thus inhibits agonist-induced cAMP production. Interacts with OPN3; the interaction results in a decrease in MC1R-mediated cAMP signaling and ultimately a decrease in melanin production in melanocytes.

It localises to the cell membrane. Receptor for MSH (alpha, beta and gamma) and ACTH. The activity of this receptor is mediated by G proteins which activate adenylate cyclase. Mediates melanogenesis, the production of eumelanin (black/brown) and phaeomelanin (red/yellow), via regulation of cAMP signaling in melanocytes. The sequence is that of Melanocyte-stimulating hormone receptor (MC1R) from Saguinus imperator (Emperor tamarin).